Reading from the N-terminus, the 524-residue chain is Phosphoenolpyruvate carboxykinase (ATP) (524 aa).

The substrate site is built by arginine 52, tyrosine 188, and lysine 194. ATP is bound by residues lysine 194, histidine 213, and 229–237; that span reads GLSGTGKTT. Mn(2+)-binding residues include lysine 194 and histidine 213. Aspartate 250 lines the Mn(2+) pocket. ATP contacts are provided by glutamate 278, arginine 314, and threonine 439. Residue arginine 314 participates in substrate binding.

It belongs to the phosphoenolpyruvate carboxykinase (ATP) family. Mn(2+) serves as cofactor.

It localises to the cytoplasm. It carries out the reaction oxaloacetate + ATP = phosphoenolpyruvate + ADP + CO2. It participates in carbohydrate biosynthesis; gluconeogenesis. Its function is as follows. Involved in the gluconeogenesis. Catalyzes the conversion of oxaloacetate (OAA) to phosphoenolpyruvate (PEP) through direct phosphoryl transfer between the nucleoside triphosphate and OAA. The sequence is that of Phosphoenolpyruvate carboxykinase (ATP) from Campylobacter lari (strain RM2100 / D67 / ATCC BAA-1060).